The sequence spans 160 residues: SsrA-binding protein (160 aa).

It belongs to the SmpB family.

Its subcellular location is the cytoplasm. In terms of biological role, required for rescue of stalled ribosomes mediated by trans-translation. Binds to transfer-messenger RNA (tmRNA), required for stable association of tmRNA with ribosomes. tmRNA and SmpB together mimic tRNA shape, replacing the anticodon stem-loop with SmpB. tmRNA is encoded by the ssrA gene; the 2 termini fold to resemble tRNA(Ala) and it encodes a 'tag peptide', a short internal open reading frame. During trans-translation Ala-aminoacylated tmRNA acts like a tRNA, entering the A-site of stalled ribosomes, displacing the stalled mRNA. The ribosome then switches to translate the ORF on the tmRNA; the nascent peptide is terminated with the 'tag peptide' encoded by the tmRNA and targeted for degradation. The ribosome is freed to recommence translation, which seems to be the essential function of trans-translation. The sequence is that of SsrA-binding protein from Enterobacter sp. (strain 638).